A 278-amino-acid polypeptide reads, in one-letter code: 1-acyl-sn-glycerol-3-phosphate acyltransferase beta (278 aa).

The first 23 residues, 1-23 (MDPWPWLTAALLLLLLLVQLSRT), serve as a signal peptide directing secretion. Topologically, residues 24–29 (ARFYAK) are lumenal. Residues 30–50 (VGLYCVLCLSFSAAASIVCLL) traverse the membrane as a helical segment. At 51-121 (RHGGRTVDNM…PKRCVQIAKR (71 aa)) the chain is on the cytoplasmic side. The HXXXXD motif signature appears at 98 to 103 (HQSILD). A helical membrane pass occupies residues 122–142 (ELMFTGPVGLIMYLGGVYFIN). The Lumenal portion of the chain corresponds to 143–278 (RQQARTAMSV…IKEPGVLPAQ (136 aa)). The EGTR motif signature appears at 172-175 (EGTR).

The protein belongs to the 1-acyl-sn-glycerol-3-phosphate acyltransferase family. As to expression, expressed at high levels in the liver, at intermediate levels in the kidney, gut, heart and skeletal muscles. Undetectable in brain and spleen.

It is found in the endoplasmic reticulum membrane. The enzyme catalyses a 1-acyl-sn-glycero-3-phosphate + an acyl-CoA = a 1,2-diacyl-sn-glycero-3-phosphate + CoA. It catalyses the reaction 1-(9Z-octadecenoyl)-sn-glycero-3-phosphate + (9Z)-octadecenoyl-CoA = 1,2-di-(9Z-octadecenoyl)-sn-glycero-3-phosphate + CoA. It carries out the reaction 1-(9Z-octadecenoyl)-sn-glycero-3-phosphate + hexadecanoyl-CoA = 1-(9Z)-octadecenoyl-2-hexadecanoyl-sn-glycero-3-phosphate + CoA. The catalysed reaction is heptadecanoyl-CoA + 1-(9Z-octadecenoyl)-sn-glycero-3-phosphate = 1-(9Z)-octadecenoyl-2-heptadecanoyl-sn-glycero-3-phosphate + CoA. The enzyme catalyses 1-(9Z-octadecenoyl)-sn-glycero-3-phosphate + (9Z,12Z)-octadecadienoyl-CoA = 1-(9Z)-octadecenoyl-2-(9Z,12Z)-octadecadienoyl-sn-glycero-3-phosphate + CoA. It catalyses the reaction 1-(9Z-octadecenoyl)-sn-glycero-3-phosphate + tetradecanoyl-CoA = 1-(9Z)-octadecenoyl-2-tetradecanoyl-sn-glycero-3-phosphate + CoA. It carries out the reaction pentadecanoyl-CoA + 1-(9Z-octadecenoyl)-sn-glycero-3-phosphate = 1-(9Z)-octadecenoyl-2-pentadecanoyl-sn-glycero-3-phosphate + CoA. The catalysed reaction is 1-hexadecanoyl-sn-glycero-3-phosphate + (9Z)-octadecenoyl-CoA = 1-hexadecanoyl-2-(9Z-octadecenoyl)-sn-glycero-3-phosphate + CoA. The enzyme catalyses 1-tetradecanoyl-sn-glycerol 3-phosphate + (9Z)-octadecenoyl-CoA = 1-tetradecanoyl-2-(9Z)-octadecenoyl-sn-glycero-3-phosphate + CoA. It catalyses the reaction 1-(9Z,12Z,15Z)-octadecatrienoyl-sn-glycero-3-phosphate + (9Z)-octadecenoyl-CoA = 1-(9Z,12Z,15Z)-octadecatrienoyl-2-(9Z)-octadecenoyl-sn-glycero-3-phosphate + CoA. It carries out the reaction 1-(6Z,9Z,12Z-octadecatrienoyl)-sn-glycero-3-phosphate + (9Z)-octadecenoyl-CoA = (6Z,9Z,12Z)-octadecatrienoyl-2-(9Z)-octadecenoyl-sn-glycero-3-phosphate + CoA. The catalysed reaction is 1-eicosanoyl-sn-glycero-3-phosphate + (9Z)-octadecenoyl-CoA = 1-eicosanoyl-2-(9Z)-octadecenoyl-sn-glycero-3-phosphate + CoA. The enzyme catalyses 1-hexadecanoyl-sn-glycero-3-phosphate + octadecanoyl-CoA = 1-hexadecanoyl-2-octadecanoyl-sn-glycero-3-phosphate + CoA. It catalyses the reaction 1-hexadecanoyl-sn-glycero-3-phosphate + (5Z,8Z,11Z,14Z)-eicosatetraenoyl-CoA = 1-hexadecanoyl-2-(5Z,8Z,11Z,14Z-eicosatetraenoyl)-sn-glycero-3-phosphate + CoA. It carries out the reaction 1-hexadecanoyl-sn-glycero-3-phosphate + hexadecanoyl-CoA = 1,2-dihexadecanoyl-sn-glycero-3-phosphate + CoA. The catalysed reaction is 1-hexadecanoyl-sn-glycero-3-phosphate + tetradecanoyl-CoA = 1-hexadecanoyl-2-tetradecanoyl-sn-glycero-3-phosphate + CoA. The enzyme catalyses (11Z)-octadecenoyl-CoA + 1-(9Z-octadecenoyl)-sn-glycero-3-phosphate = 1-(9Z)-octadecenoyl-2-(11Z)-octadecenoyl-sn-glycero-3-phosphate + CoA. Its pathway is phospholipid metabolism; CDP-diacylglycerol biosynthesis; CDP-diacylglycerol from sn-glycerol 3-phosphate: step 2/3. Functionally, converts 1-acyl-sn-glycerol-3-phosphate (lysophosphatidic acid or LPA) into 1,2-diacyl-sn-glycerol-3-phosphate (phosphatidic acid or PA) by incorporating an acyl moiety at the sn-2 position of the glycerol backbone. The polypeptide is 1-acyl-sn-glycerol-3-phosphate acyltransferase beta (Agpat2) (Mus musculus (Mouse)).